The following is a 101-amino-acid chain: Apolipoprotein C-II (101 aa).

An N-terminal signal peptide occupies residues 1–22; sequence MGIRYLLVLVLVLLVLGCEVQG. Residues 66–74 are lipid binding; the sequence is TVDEKIREI. The interval 78-101 is lipoprotein lipase cofactor; that stretch reads STAAVSTYAGIFTDQLLSMLKGDQ.

Belongs to the apolipoprotein C2 family. Post-translationally, proapolipoprotein C-II is synthesized as a sialic acid containing glycoprotein which is subsequently desialylated prior to its proteolytic processing. Proapolipoprotein C-II, the major form found in plasma undergoes proteolytic cleavage of its N-terminal hexapeptide to generate apolipoprotein C-II, which occurs as the minor form in plasma.

The protein localises to the secreted. Its function is as follows. Component of chylomicrons, very low-density lipoproteins (VLDL), low-density lipoproteins (LDL), and high-density lipoproteins (HDL) in plasma. Plays an important role in lipoprotein metabolism as an activator of lipoprotein lipase. Both proapolipoprotein C-II and apolipoprotein C-II can activate lipoprotein lipase. This is Apolipoprotein C-II (APOC2) from Mirounga angustirostris (Northern elephant seal).